Consider the following 171-residue polypeptide: ATP synthase subunit b (171 aa).

The helical transmembrane segment at 4–24 (IAFFVICVGFPSLIFASASIQ) threads the bilayer.

The protein belongs to the ATPase B chain family. As to quaternary structure, F-type ATPases have 2 components, F(1) - the catalytic core - and F(0) - the membrane proton channel. F(1) has five subunits: alpha(3), beta(3), gamma(1), delta(1), epsilon(1). F(0) has three main subunits: a(1), b(2) and c(10-14). The alpha and beta chains form an alternating ring which encloses part of the gamma chain. F(1) is attached to F(0) by a central stalk formed by the gamma and epsilon chains, while a peripheral stalk is formed by the delta and b chains.

It is found in the cell inner membrane. In terms of biological role, f(1)F(0) ATP synthase produces ATP from ADP in the presence of a proton or sodium gradient. F-type ATPases consist of two structural domains, F(1) containing the extramembraneous catalytic core and F(0) containing the membrane proton channel, linked together by a central stalk and a peripheral stalk. During catalysis, ATP synthesis in the catalytic domain of F(1) is coupled via a rotary mechanism of the central stalk subunits to proton translocation. Component of the F(0) channel, it forms part of the peripheral stalk, linking F(1) to F(0). This chain is ATP synthase subunit b, found in Helicobacter hepaticus (strain ATCC 51449 / 3B1).